The primary structure comprises 401 residues: MRCDRVWSKARLATFAAGRPGIGVVEDGVVASLSGRIVYAGPATEAPAFEALETLDCEGRWITPGLIDPHTHLVFGGDRAREFELRLAGATYEEIARAGGGIVSTMKATRAASEGELVASALPRLDALIAEGLTTIEIKSGYGLSLDDELKSLRAARALADVRKVSVTTTFLGAHALPPEYEGDPDGYIDHVCYQMIPAVAAEGLADAVDAFCEGIGFSRAQTRRVFQAARERGLPVKLHAEQLSNLDGAALAAEFGALSADHLEHLDGAGIAAMAQAGTTAVLLPGAFYFVRETRLPPIQALRAAGVPLALATDCNPGTSPLTSLLLTLNMAATLFRMTVDECLAGVTREAARAIGRLDHIGTLEAGKSCDLAIWDIERPAQLVYRMGFNPLHARVWKGL.

2 residues coordinate Fe(3+): His70 and His72. 2 residues coordinate Zn(2+): His70 and His72. Residues Arg79, Tyr142, and His175 each coordinate 4-imidazolone-5-propanoate. Residue Tyr142 coordinates N-formimidoyl-L-glutamate. His240 provides a ligand contact to Fe(3+). Position 240 (His240) interacts with Zn(2+). Gln243 is a binding site for 4-imidazolone-5-propanoate. Fe(3+) is bound at residue Asp315. Zn(2+) is bound at residue Asp315. 2 residues coordinate N-formimidoyl-L-glutamate: Asn317 and Gly319. Thr320 is a binding site for 4-imidazolone-5-propanoate.

The protein belongs to the metallo-dependent hydrolases superfamily. HutI family. Zn(2+) serves as cofactor. Requires Fe(3+) as cofactor.

It localises to the cytoplasm. The enzyme catalyses 4-imidazolone-5-propanoate + H2O = N-formimidoyl-L-glutamate. It functions in the pathway amino-acid degradation; L-histidine degradation into L-glutamate; N-formimidoyl-L-glutamate from L-histidine: step 3/3. Catalyzes the hydrolytic cleavage of the carbon-nitrogen bond in imidazolone-5-propanoate to yield N-formimidoyl-L-glutamate. It is the third step in the universal histidine degradation pathway. The polypeptide is Imidazolonepropionase (Caulobacter sp. (strain K31)).